We begin with the raw amino-acid sequence, 159 residues long: Ribosome maturation factor RimP (159 aa).

Belongs to the RimP family.

Its subcellular location is the cytoplasm. Functionally, required for maturation of 30S ribosomal subunits. This chain is Ribosome maturation factor RimP, found in Halothermothrix orenii (strain H 168 / OCM 544 / DSM 9562).